A 173-amino-acid chain; its full sequence is uncharacterized protein (173 aa).

Helical transmembrane passes span 13–35 (LQVI…PLLS), 50–72 (IIFI…FLGL), 107–129 (NYLI…KYLL), and 139–161 (GYLI…RLIL).

The protein localises to the cell membrane. This is an uncharacterized protein from Rickettsia prowazekii (strain Madrid E).